The chain runs to 299 residues: Methionine aminopeptidase (299 aa).

H64 serves as a coordination point for substrate. 3 residues coordinate a divalent metal cation: D84, D95, and H158. H166 contributes to the substrate binding site. A divalent metal cation-binding residues include E191 and E284.

Belongs to the peptidase M24A family. Methionine aminopeptidase archaeal type 2 subfamily. Monomer. Co(2+) serves as cofactor. Zn(2+) is required as a cofactor. Requires Mn(2+) as cofactor. The cofactor is Fe(2+).

It carries out the reaction Release of N-terminal amino acids, preferentially methionine, from peptides and arylamides.. In terms of biological role, removes the N-terminal methionine from nascent proteins. The N-terminal methionine is often cleaved when the second residue in the primary sequence is small and uncharged (Met-Ala-, Cys, Gly, Pro, Ser, Thr, or Val). This chain is Methionine aminopeptidase, found in Methanothermobacter thermautotrophicus (strain ATCC 29096 / DSM 1053 / JCM 10044 / NBRC 100330 / Delta H) (Methanobacterium thermoautotrophicum).